The primary structure comprises 139 residues: MSVVKEFREFIARGNVIDLAVGVIIGAAFNGIVKSLVDQVIMPPIGLLTGGLDFSKLEWVLRPEDPASEAIEKVAIQYGAFVNTVIQFFIVATVVFLLVKLVNEIRRQDAAEPAPAAPPAPTAEETLLTEIRDLLAKKG.

The next 2 membrane-spanning stretches (helical) occupy residues 16-36 and 79-99; these read VIDL…VKSL and GAFV…FLLV.

This sequence belongs to the MscL family. As to quaternary structure, homopentamer.

The protein localises to the cell inner membrane. Channel that opens in response to stretch forces in the membrane lipid bilayer. May participate in the regulation of osmotic pressure changes within the cell. This Caulobacter vibrioides (strain ATCC 19089 / CIP 103742 / CB 15) (Caulobacter crescentus) protein is Large-conductance mechanosensitive channel.